Reading from the N-terminus, the 160-residue chain is Ribonuclease P protein component 2 (160 aa).

It belongs to the eukaryotic/archaeal RNase P protein component 2 family. In terms of assembly, consists of a catalytic RNA component and at least 4-5 protein subunits.

It is found in the cytoplasm. The enzyme catalyses Endonucleolytic cleavage of RNA, removing 5'-extranucleotides from tRNA precursor.. Its function is as follows. Part of ribonuclease P, a protein complex that generates mature tRNA molecules by cleaving their 5'-ends. This is Ribonuclease P protein component 2 from Methanosphaerula palustris (strain ATCC BAA-1556 / DSM 19958 / E1-9c).